Reading from the N-terminus, the 624-residue chain is Kelch-like protein diablo (624 aa).

Residues 1-21 (MGDPLLPGSTGLGSGPAAAAT) are compositionally biased toward low complexity. The interval 1–55 (MGDPLLPGSTGLGSGPAAAATGGSGTTGTGLGSGGTSGAERPPSPARLTHTSEKH) is disordered. Residues 22 to 37 (GGSGTTGTGLGSGGTS) are compositionally biased toward gly residues. One can recognise a BTB domain in the interval 73–140 (CDVVLNVGGR…CYTAHIIVEE (68 aa)). The 103-residue stretch at 175 to 277 (CLGIRAFADT…SPKFLVGTVG (103 aa)) folds into the BACK domain. 6 Kelch repeats span residues 324–370 (VLFA…VLND), 372–418 (LYAV…VLDG), 419–465 (FLYA…VLSG), 467–512 (LYAI…VFNN), 514–559 (IYAV…VVNG), and 560–606 (QLYA…VMRA).

The protein operates within protein modification; protein ubiquitination. Functionally, probable substrate-specific adapter of an E3 ubiquitin-protein ligase complex which mediates the ubiquitination and subsequent proteasomal degradation of target proteins. May have a role in synapse differentiation and growth. This Drosophila virilis (Fruit fly) protein is Kelch-like protein diablo.